The chain runs to 76 residues: Small ribosomal subunit protein bS18 (76 aa).

It belongs to the bacterial ribosomal protein bS18 family. Part of the 30S ribosomal subunit. Forms a tight heterodimer with protein bS6.

Binds as a heterodimer with protein bS6 to the central domain of the 16S rRNA, where it helps stabilize the platform of the 30S subunit. This chain is Small ribosomal subunit protein bS18, found in Pseudomonas fluorescens (strain ATCC BAA-477 / NRRL B-23932 / Pf-5).